A 190-amino-acid chain; its full sequence is GTP cyclohydrolase 1 (190 aa).

Positions 80, 83, and 151 each coordinate Zn(2+).

This sequence belongs to the GTP cyclohydrolase I family. In terms of assembly, toroid-shaped homodecamer, composed of two pentamers of five dimers.

It carries out the reaction GTP + H2O = 7,8-dihydroneopterin 3'-triphosphate + formate + H(+). It functions in the pathway cofactor biosynthesis; 7,8-dihydroneopterin triphosphate biosynthesis; 7,8-dihydroneopterin triphosphate from GTP: step 1/1. The polypeptide is GTP cyclohydrolase 1 (Rickettsia felis (strain ATCC VR-1525 / URRWXCal2) (Rickettsia azadi)).